Reading from the N-terminus, the 444-residue chain is MFSASPANRNIFTVSKLNHLARSVLESEIGQVWLSAEISNFVAASSGHWYFTLKDNRAQIKSAMFKGANRKVMTRPKEGDKVLVQANLSIYEPRGDYQLIVEHLEPEGEGQLKRQFEALKLALSAQGLFANENKQPLPDSISRIGVVTSATGAALHDILTVLKRRNPAVEVIIYPTQVQGANASRQICRSIEIANQRNEVDILIVGRGGGSLEDLWCFNEENVAWAIHYSVLPIVSAVGHEVDITIADFVADLRAPTPSAAAELVSQSQIEMLSALTAKRDRLYKNTRTLLKELHYQQQSLTQELNTYHPKNQLRQHMQRVDNQLTAITHNMTTRLMRAKQTCDSRISKLSQLSPKALLKEQQNTHNLLSQRLTQAWRRGVEQRHLKLANASHLLDTVSPLSTLARGYSITFKNDKVVKSQKDLAKGDVITNRFADGETKSTVN.

It belongs to the XseA family. Heterooligomer composed of large and small subunits.

It localises to the cytoplasm. It carries out the reaction Exonucleolytic cleavage in either 5'- to 3'- or 3'- to 5'-direction to yield nucleoside 5'-phosphates.. Its function is as follows. Bidirectionally degrades single-stranded DNA into large acid-insoluble oligonucleotides, which are then degraded further into small acid-soluble oligonucleotides. The polypeptide is Exodeoxyribonuclease 7 large subunit (Pseudoalteromonas atlantica (strain T6c / ATCC BAA-1087)).